A 187-amino-acid chain; its full sequence is Elongation factor P (187 aa).

This sequence belongs to the elongation factor P family.

The protein localises to the cytoplasm. Its pathway is protein biosynthesis; polypeptide chain elongation. Involved in peptide bond synthesis. Stimulates efficient translation and peptide-bond synthesis on native or reconstituted 70S ribosomes in vitro. Probably functions indirectly by altering the affinity of the ribosome for aminoacyl-tRNA, thus increasing their reactivity as acceptors for peptidyl transferase. The polypeptide is Elongation factor P (Bifidobacterium animalis subsp. lactis (strain AD011)).